The following is a 187-amino-acid chain: Orotate phosphoribosyltransferase (187 aa).

5-phospho-alpha-D-ribose 1-diphosphate-binding positions include Arg-98, Lys-99, Lys-102, His-104, and 128–136; that span reads EDVTTTGGS. Residues Thr-132 and Arg-160 each coordinate orotate.

Belongs to the purine/pyrimidine phosphoribosyltransferase family. PyrE subfamily. Homodimer. The cofactor is Mg(2+).

It catalyses the reaction orotidine 5'-phosphate + diphosphate = orotate + 5-phospho-alpha-D-ribose 1-diphosphate. It participates in pyrimidine metabolism; UMP biosynthesis via de novo pathway; UMP from orotate: step 1/2. In terms of biological role, catalyzes the transfer of a ribosyl phosphate group from 5-phosphoribose 1-diphosphate to orotate, leading to the formation of orotidine monophosphate (OMP). This is Orotate phosphoribosyltransferase from Rhodopseudomonas palustris (strain BisB5).